Reading from the N-terminus, the 93-residue chain is C-C motif chemokine 14 (93 aa).

The N-terminal stretch at 1–19 (MKISVAAIPFFLLITIALG) is a signal peptide. A glycan (O-linked (GalNAc...) serine; partial) is linked at serine 26. 2 cysteine pairs are disulfide-bonded: cysteine 35/cysteine 59 and cysteine 36/cysteine 75.

Belongs to the intercrine beta (chemokine CC) family. The N-terminal processed forms HCC-1(3-74), HCC-1(4-74) and HCC-1(9-74) are produced in small amounts by proteolytic cleavage after secretion in blood. In terms of processing, HCC-1(1-74), but not HCC-1(3-74) and HCC-1(4-74), is partially O-glycosylated; the O-linked glycan consists of one Gal-GalNAc disaccharide, further modified by two N-acetylneuraminic acids. In terms of tissue distribution, expressed constitutively in several normal tissues: spleen, liver, skeletal and heart muscle, gut, and bone marrow, present at high concentrations (1-80 nM) in plasma.

It localises to the secreted. Has weak activities on human monocytes and acts via receptors that also recognize MIP-1 alpha. It induces intracellular Ca(2+) changes and enzyme release, but no chemotaxis, at concentrations of 100-1,000 nM, and is inactive on T-lymphocytes, neutrophils, and eosinophil leukocytes. Enhances the proliferation of CD34 myeloid progenitor cells. The processed form HCC-1(9-74) is a chemotactic factor that attracts monocytes, eosinophils, and T-cells and is a ligand for CCR1, CCR3 and CCR5. The sequence is that of C-C motif chemokine 14 (CCL14) from Homo sapiens (Human).